The sequence spans 219 residues: 7-cyano-7-deazaguanine synthase 2 (219 aa).

Residue 8 to 18 coordinates ATP; it reads YSGGMDSFTAL. Zn(2+) is bound by residues cysteine 185, cysteine 193, cysteine 196, and cysteine 199.

It belongs to the QueC family. The cofactor is Zn(2+).

The enzyme catalyses 7-carboxy-7-deazaguanine + NH4(+) + ATP = 7-cyano-7-deazaguanine + ADP + phosphate + H2O + H(+). Its pathway is purine metabolism; 7-cyano-7-deazaguanine biosynthesis. In terms of biological role, catalyzes the ATP-dependent conversion of 7-carboxy-7-deazaguanine (CDG) to 7-cyano-7-deazaguanine (preQ(0)). This Colwellia psychrerythraea (strain 34H / ATCC BAA-681) (Vibrio psychroerythus) protein is 7-cyano-7-deazaguanine synthase 2.